The primary structure comprises 80 residues: Dolichol-phosphate mannose synthase subunit 2 (80 aa).

A run of 2 helical transmembrane segments spans residues 10-30 and 50-70; these read LLLS…VIIL and ILVP…FIGM.

The protein belongs to the DPM2 family. Component of the dolichol-phosphate mannose (DPM) synthase complex composed of DPMS1, DPMS2 and DPMS3; in the complex interacts directly with DPMS3. Associates with the GPI-GlcNAc transferase (GPI-GnT) complex.

It localises to the endoplasmic reticulum membrane. It functions in the pathway protein modification; protein glycosylation. Regulates the biosynthesis of dolichol phosphate-mannose. Regulatory subunit of the dolichol-phosphate mannose (DPM) synthase complex; essential for the ER localization and stable expression of DPMS1. The sequence is that of Dolichol-phosphate mannose synthase subunit 2 from Arabidopsis thaliana (Mouse-ear cress).